Reading from the N-terminus, the 282-residue chain is CD320 antigen (282 aa).

The first 35 residues, 1–35 (MSGGWMAQVGAWRTGALGLALLLLLGLGLGLEAAA), serve as a signal peptide directing secretion. The Extracellular portion of the chain corresponds to 36–229 (SPLSTPTSAQ…GDQSGSPTAY (194 aa)). Residues 53–90 (SCPPTKFQCRTSGLCVPLTWRCDRDLDCSDGSDEEECR) enclose the LDL-receptor class A 1 domain. 3 disulfides stabilise this stretch: Cys-54–Cys-67, Cys-61–Cys-80, and Cys-74–Cys-89. The Ca(2+) site is built by Trp-72, Asp-75, Asp-77, Asp-79, Asp-85, and Glu-86. Residue Asn-126 is glycosylated (N-linked (GlcNAc...) asparagine). In terms of domain architecture, LDL-receptor class A 2 spans 131 to 168 (ACLAGELRCTLSDDCIPLTWRCDGHPDCPDSSDELGCG). Disulfide bonds link Cys-132–Cys-145, Cys-139–Cys-158, and Cys-152–Cys-167. Ca(2+)-binding residues include Trp-150, Asp-153, His-155, Asp-157, Asp-163, and Glu-164. N-linked (GlcNAc...) asparagine glycans are attached at residues Asn-195 and Asn-213. A disordered region spans residues 199-223 (MGPPVTLESVPSVGNATSSSAGDQS). The segment covering 210–223 (SVGNATSSSAGDQS) has biased composition (polar residues). Residues 230–250 (GVIAAAAVLSASLVTATLLLL) form a helical membrane-spanning segment. The Cytoplasmic portion of the chain corresponds to 251-282 (SWLRAQERLRPLGLLVAMKESLLLSEQKTSLP).

Interacts (via LDL-receptor class A domains) with TCN2. In terms of tissue distribution, detected in the germinal center (GC) of lymphoid follicles (at protein level). Expressed abundantly on follicular dendritic cells (FDCs).

It is found in the cell membrane. In terms of biological role, receptor for transcobalamin saturated with cobalamin (TCbl). Plays an important role in cobalamin uptake. Plasma membrane protein that is expressed on follicular dendritic cells (FDC) and mediates interaction with germinal center B cells. Functions as costimulator to promote B cell responses to antigenic stimuli; promotes B cell differentiation and proliferation. Germinal center-B (GC-B) cells differentiate into memory B-cells and plasma cells (PC) through interaction with T-cells and follicular dendritic cells (FDC). CD320 augments the proliferation of PC precursors generated by IL-10. This chain is CD320 antigen (CD320), found in Homo sapiens (Human).